Here is a 135-residue protein sequence, read N- to C-terminus: Cytochrome c2 (135 aa).

The N-terminal stretch at 1 to 23 (MKKGFLAAGVFAAVAFASGAALA) is a signal peptide. Residues Cys37, Cys40, His41, and Met114 each contribute to the heme c site.

It belongs to the cytochrome c family. Post-translationally, binds 1 heme c group covalently per subunit.

Its function is as follows. Cytochrome c2 is found mainly in purple, non-sulfur, photosynthetic bacteria where it functions as the electron donor to the oxidized bacteriochlorophyll in the photophosphorylation pathway. However, it may also have a role in the respiratory chain and is found in some non-photosynthetic bacteria. The sequence is that of Cytochrome c2 (cycA) from Rhodospirillum rubrum (strain ATCC 11170 / ATH 1.1.1 / DSM 467 / LMG 4362 / NCIMB 8255 / S1).